The chain runs to 267 residues: tRNA pseudouridine synthase A (267 aa).

Residue Asp-51 is the Nucleophile of the active site. Tyr-109 contacts substrate.

Belongs to the tRNA pseudouridine synthase TruA family. In terms of assembly, homodimer.

It catalyses the reaction uridine(38/39/40) in tRNA = pseudouridine(38/39/40) in tRNA. Its function is as follows. Formation of pseudouridine at positions 38, 39 and 40 in the anticodon stem and loop of transfer RNAs. This chain is tRNA pseudouridine synthase A, found in Staphylococcus aureus (strain USA300).